The primary structure comprises 355 residues: MGTKGLPLYPDPSRVPGTKTQNNLESDYLARDGPSSNSSFHSSEEEGTDLEGDMLDCSGSRPLLMESEEEDESCRPPPGKLGGAVPFAPPEVSPEQAKTVQGGRKNQFQAFTQPATDGLSEPDVFAIAPFRSSRVPNDDMDIFSKAPFVSKSSMAPSQPEESDVFLRAPFTKKKSMEELTVIQCTSQELPAQTGLLSQTGDVPLPAGRERAVYTSVQAQYSTAGFVQQSNLLSHSVQAADHLDSISPRGSCLESGGHSNDRNKGPQLQKEAVSGPMAGKPFRPQSLSKYSRHYSPEDEPSPEAQPIAAYKIVSQTNKQSIAGSVSITSLSSRTTELPAADPFALAPFPSKSGKKP.

Residues 1-104 (MGTKGLPLYP…EQAKTVQGGR (104 aa)) are disordered. Lys19 carries the post-translational modification N6-acetyllysine. A compositionally biased stretch (acidic residues) spans 45–54 (EEGTDLEGDM). A Phosphoserine modification is found at Ser175. 2 disordered regions span residues 247–310 (PRGS…AAYK) and 325–355 (SITSLSSRTTELPAADPFALAPFPSKSGKKP). Tyr293 is subject to Phosphotyrosine. Ser294 is modified (phosphoserine). The segment covering 325–334 (SITSLSSRTT) has biased composition (polar residues). A compositionally biased stretch (low complexity) spans 336–348 (LPAADPFALAPFP).

This is an uncharacterized protein from Homo sapiens (Human).